The sequence spans 596 residues: Histone deacetylase 9 (596 aa).

2 stretches are compositionally biased toward basic and acidic residues: residues 132–153 (REKEQKMEQQRKEQEAERHRQE) and 160–172 (RSKDRVKERAVAS). Disordered regions lie at residues 132 to 172 (REKE…AVAS), 214 to 258 (HTSL…VRSR), 293 to 313 (SSVSSSSPVSGPSSPNNGPVA), and 522 to 596 (QPEG…QQVT). The interaction with mef2 stretch occupies residues 172 to 222 (STEVKQKLQEFILSKSATKEPLTNGTSHSMGRHPKLWYTAAHHTSLDQSSP). Residues 221–237 (SPPPSGTSPTYKCPPPG) are compositionally biased toward pro residues. Over residues 293 to 312 (SSVSSSSPVSGPSSPNNGPV) the composition is skewed to low complexity. The segment covering 522–536 (QPEGHLEEAEEDLHG) has biased composition (basic and acidic residues). A compositionally biased stretch (polar residues) spans 541–558 (QEKSSSIDNTRSYSSTDL). A compositionally biased stretch (basic and acidic residues) spans 567–585 (KVKEEPPDSENEIKTHLQS). A compositionally biased stretch (polar residues) spans 586–596 (EQKSVFAQQVT).

It belongs to the histone deacetylase family. HD type 2 subfamily. Homodimer. Interacts with mef2. As to expression, broadly expressed.

It is found in the nucleus. It carries out the reaction N(6)-acetyl-L-lysyl-[histone] + H2O = L-lysyl-[histone] + acetate. Its function is as follows. Devoided of intrinsic deacetylase activity, promotes the deacetylation of lysine residues on the N-terminal part of the core histones (H2A, H2B, H3 and H4) by recruiting other histone deacetylases. Histone deacetylation gives a tag for epigenetic repression and plays an important role in transcriptional regulation, cell cycle progression and developmental events. Represses MEF2-dependent transcription. The chain is Histone deacetylase 9 (hdac9) from Xenopus laevis (African clawed frog).